The sequence spans 347 residues: Quinolinate synthase (347 aa).

Residues His-47 and Ser-68 each coordinate iminosuccinate. Cys-113 is a [4Fe-4S] cluster binding site. Residues 139–141 and Ser-156 each bind iminosuccinate; that span reads YAN. Residue Cys-200 coordinates [4Fe-4S] cluster. Iminosuccinate is bound by residues 226–228 and Thr-243; that span reads HPE. Cys-297 serves as a coordination point for [4Fe-4S] cluster.

Belongs to the quinolinate synthase family. Type 1 subfamily. [4Fe-4S] cluster is required as a cofactor.

It localises to the cytoplasm. The enzyme catalyses iminosuccinate + dihydroxyacetone phosphate = quinolinate + phosphate + 2 H2O + H(+). It participates in cofactor biosynthesis; NAD(+) biosynthesis; quinolinate from iminoaspartate: step 1/1. Catalyzes the condensation of iminoaspartate with dihydroxyacetone phosphate to form quinolinate. The polypeptide is Quinolinate synthase (Escherichia coli O157:H7).